Reading from the N-terminus, the 186-residue chain is Ribosome-recycling factor (186 aa).

Belongs to the RRF family.

It is found in the cytoplasm. In terms of biological role, responsible for the release of ribosomes from messenger RNA at the termination of protein biosynthesis. May increase the efficiency of translation by recycling ribosomes from one round of translation to another. The chain is Ribosome-recycling factor from Polaromonas sp. (strain JS666 / ATCC BAA-500).